Reading from the N-terminus, the 1123-residue chain is MGSLPLILLSLLLPGALANVYSCAGSVKSTSPVDYSQLKLQVRLLTLEGHMKHEEEVNPSNGYFMIPVYNKGHYTLKVSAPAGYYFEPDSIEIKIDGKTDACSLNEDLVFHLTGFSVRGTVDGAAAGLPLVLTENGKQIAETKTEDGGKYEMRAPPGKYEVSTGAGASECISKGKTSVEVKNAPVVVTPNFKISGYQLEVHTRTESMNPFVDAVMTLYATSSIDLPNIKCVGSEGSLNVPSTHNVKCSIGKTDPRGRLSVACVPSGEYYLAASHVNGPKSINFSPNPQKVVVSQAASEARFVAQSATGRVRVTSKDLPLSGVEVLVNEKSGGKTDSQGYLKIENLKEDEHTTITAKAPNTQFSTVHANVKFPKVEIQDVTVQKFDICGQVEKSENGVLGKLTFTRKDDKRSLEIQPKADGSFCQPVSPGLFTIEPTDKTSSLTPRLLEVEVLKNAVTNLRFTHFKTNANVHLSCIGACPTATVSLFLPGQTLVRSVKGTDVFTFENIGPGTYSARLDDNGRGCWEKSEMTLVVEQSNTQPTIHFKQNGFAAQIEISHPAEIEWSNADKKQLNGKTSTKGGEVISICVPTSGVYDVSLGSCYKFERQQFKLTVPFDGVHKEKAVAARISGTIDLENDKNAAVSIRIKSSAGDREIQVPALDNGRFTFEEPLASSGEQLVIVPSSKLRLFEPTSKSVTVTGKCIENAVKFNSFRGIFLDGSIKPAVEKAVVKAVLKKDKDVVIEAISNKDGAFKIGPVKRVEDYDITATLDGFKFTPTSTPGHFQSVKLSQLSIKVVDEVTNAPLDGVLLSLVGGKGAGSDYRSNNVLDETAHKNYVALAPGEYFVRAILQEYKFSPSTSTIVVKEGQHENVVLKGKRVSFSAYGKMREMSGDAMKDVIIEALSEGCDLHQSEATTKEDGTYRIRGLLPDCEYQVHAKSYADGSPAPHSFPRSFTVSMTAEDVKGLEFMATITAKTTDIAVEIGMDTLPEIQSVRVVITKNNNDHVQVASVVAPQHLHYLVNLPRDGVEYAIRVEAEKPPQAFAAKTVRVVADQAMKVARVPLTSSKRANDVDISVGTFLSLPFFVTLALVFFNQNRVLELLGTFIDWARNTFAPTADNHHRKRK.

Positions 1–18 (MGSLPLILLSLLLPGALA) are cleaved as a signal peptide. Residues 19-1071 (NVYSCAGSVK…TSSKRANDVD (1053 aa)) are Lumenal-facing. Residues 1072-1092 (ISVGTFLSLPFFVTLALVFFN) traverse the membrane as a helical segment. The Cytoplasmic segment spans residues 1093 to 1123 (QNRVLELLGTFIDWARNTFAPTADNHHRKRK).

As to quaternary structure, may interact with nra-2 in the ER. Expressed in body wall, pharyngeal, uterine and vulval muscles, motor neurons, nerve ring, motor and ventral cord neurons, hypodermal cells in the tail, vulval epithelium and intestine.

It localises to the endoplasmic reticulum membrane. In terms of biological role, involved in the recognition and selection of protein complexes to exit the endoplasmic reticulum (ER). In muscles, regulates levamisole-sensitive nicotinic acetylcholine receptor (L-AChR) subunit composition, possibly by allowing only specific L-AChR subunit combinations to exit the ER. Specifically, may promote the inclusion of alpha subunit unc-38 into and the exclusion of unc-29 from L-AChR. Regulates L-AChR sensitivity to agonists such as nicotine and levamisole at neuro-muscular junctions. The protein is Nicotinic receptor-associated protein 4 of Caenorhabditis elegans.